We begin with the raw amino-acid sequence, 766 residues long: Protein zer-1 homolog (766 aa).

Ala-2 carries the post-translational modification N-acetylalanine. LRR repeat units follow at residues 226–245 (SLVL…IVQL), 246–268 (HKLR…KLTR), and 278–302 (LGNL…KMEE). 5 ARM repeats span residues 427-467 (RSEQ…NFGI), 511-556 (DNDH…NITD), 558-600 (TPDN…NVAE), 602-643 (KELR…HIMF), and 714-756 (PDKY…HCSN).

This sequence belongs to the zyg-11 family. As to quaternary structure, interacts with the ELOC-ELOB/Elongin BC complex. Part of an E3 ubiquitin ligase complex including ZER1, CUL2 and Elongin BC.

In terms of biological role, serves as substrate adapter subunit in the E3 ubiquitin ligase complex ZYG11B-CUL2-Elongin BC. Acts redudantly with ZYG11B to target substrates bearing N-terminal glycine degrons for proteasomal degradation. Involved in the clearance of proteolytic fragments generated by caspase cleavage during apoptosis since N-terminal glycine degrons are strongly enriched at caspase cleavage sites. Also important in the quality control of protein N-myristoylation in which N-terminal glycine degrons are conditionally exposed after a failure of N-myristoylation. The protein is Protein zer-1 homolog (ZER1) of Pongo abelii (Sumatran orangutan).